The sequence spans 600 residues: NADH-quinone oxidoreductase subunit C/D (600 aa).

The segment at methionine 1 to glutamine 190 is NADH dehydrogenase I subunit C. The NADH dehydrogenase I subunit D stretch occupies residues aspartate 214 to arginine 600.

This sequence in the N-terminal section; belongs to the complex I 30 kDa subunit family. It in the C-terminal section; belongs to the complex I 49 kDa subunit family. NDH-1 is composed of 13 different subunits. Subunits NuoB, CD, E, F, and G constitute the peripheral sector of the complex.

The protein localises to the cell inner membrane. The catalysed reaction is a quinone + NADH + 5 H(+)(in) = a quinol + NAD(+) + 4 H(+)(out). NDH-1 shuttles electrons from NADH, via FMN and iron-sulfur (Fe-S) centers, to quinones in the respiratory chain. The immediate electron acceptor for the enzyme in this species is believed to be ubiquinone. Couples the redox reaction to proton translocation (for every two electrons transferred, four hydrogen ions are translocated across the cytoplasmic membrane), and thus conserves the redox energy in a proton gradient. The protein is NADH-quinone oxidoreductase subunit C/D of Escherichia coli O157:H7.